We begin with the raw amino-acid sequence, 331 residues long: MISFSSFYQQIADSNLQHWLETLPSILGKWQRDHKHGNLPKWEKVLNKLHYPAPDQVDFVDSVTVGSGEQLSPGEKEKLENLLRLFMPWRKGPFHIHGIHIDTEWRSDWKWDRVKQHISPLKNRTVLDVGCGSGYHMWRMLGSGAKRVVGIDPSPLFLCQFEAVKRLAGTHHPVHLLPLGIEELPPLDAFDTVFSMGVLYHRRSPIDHLLQLRDQLRTGGELVLETLVIDGDENAVLVPQDRYGKMNNVWFIPSVAALMLWLKKCDFTDIRCVDTDVTALAEQRRTDWMPNESLVEYLDPNDITKTVEGYPAPKRATIIAVKNQPNQDLIS.

Residues Lys-91, Trp-105, Lys-110, Gly-130, 152 to 154 (DPS), 181 to 182 (IE), Met-196, Tyr-200, and Arg-315 contribute to the carboxy-S-adenosyl-L-methionine site.

It belongs to the class I-like SAM-binding methyltransferase superfamily. CmoB family. In terms of assembly, homotetramer.

The enzyme catalyses carboxy-S-adenosyl-L-methionine + 5-hydroxyuridine(34) in tRNA = 5-carboxymethoxyuridine(34) in tRNA + S-adenosyl-L-homocysteine + H(+). Catalyzes carboxymethyl transfer from carboxy-S-adenosyl-L-methionine (Cx-SAM) to 5-hydroxyuridine (ho5U) to form 5-carboxymethoxyuridine (cmo5U) at position 34 in tRNAs. This is tRNA U34 carboxymethyltransferase from Shewanella baltica (strain OS185).